Here is a 429-residue protein sequence, read N- to C-terminus: Serine hydroxymethyltransferase (429 aa).

120–122 is a binding site for (6S)-5,6,7,8-tetrahydrofolate; sequence GHI. An N6-(pyridoxal phosphate)lysine modification is found at Lys-226.

The protein belongs to the SHMT family. As to quaternary structure, homodimer. Requires pyridoxal 5'-phosphate as cofactor.

The protein localises to the cytoplasm. Its pathway is amino-acid biosynthesis; glycine biosynthesis; glycine from L-serine: step 1/1. Its function is as follows. Catalyzes the reversible interconversion of serine and glycine with a modified folate serving as the one-carbon carrier. Also exhibits a pteridine-independent aldolase activity toward beta-hydroxyamino acids, producing glycine and aldehydes, via a retro-aldol mechanism. The chain is Serine hydroxymethyltransferase from Pyrobaculum arsenaticum (strain DSM 13514 / JCM 11321 / PZ6).